The chain runs to 502 residues: Probable ADP-dependent glucokinase (502 aa).

The signal sequence occupies residues 1 to 32 (MFSETFVPSIFSYKHRLLHLSVLFFIVPYWYS). An ADPK domain is found at 44–497 (SVETAMFLSW…LLYSQFYRLN (454 aa)). 2 N-linked (GlcNAc...) asparagine glycosylation sites follow: asparagine 89 and asparagine 190. Positions 290, 320, and 481 each coordinate Mg(2+). The Proton acceptor role is filled by aspartate 481.

This sequence belongs to the ADP-dependent glucokinase family. As to quaternary structure, monomer. Mg(2+) is required as a cofactor.

It is found in the secreted. It carries out the reaction D-glucose + ADP = D-glucose 6-phosphate + AMP + H(+). Its pathway is carbohydrate degradation; glycolysis. In terms of biological role, catalyzes the phosphorylation of D-glucose to D-glucose 6-phosphate using ADP as the phosphate donor. GDP and CDP can replace ADP, but with reduced efficiency. The chain is Probable ADP-dependent glucokinase from Caenorhabditis elegans.